Here is a 632-residue protein sequence, read N- to C-terminus: Thioredoxin domain-containing protein C959.05c (632 aa).

An N-terminal signal peptide occupies residues 1-22; that stretch reads MKLFLYHFTFIVYYFIISFSYA. 3 N-linked (GlcNAc...) asparagine glycosylation sites follow: Asn35, Asn41, and Asn140. Residues 153-284 form the Thioredoxin domain; the sequence is SDSSSTDPAF…LLSYSNQVAS (132 aa). Residues Cys209 and Cys212 are joined by a disulfide bond. Asn557 carries N-linked (GlcNAc...) asparagine glycosylation. The chain crosses the membrane as a helical span at residues 583 to 603; it reads LIVFNLLIALLILSILTIISA.

It belongs to the protein disulfide isomerase family.

The protein localises to the endoplasmic reticulum membrane. The catalysed reaction is Catalyzes the rearrangement of -S-S- bonds in proteins.. Its function is as follows. Acts as a membrane-bound chaperone in endoplasmic reticulum quality control. Probably facilitates presentation of substrate to membrane-bound components of the degradation machinery. The polypeptide is Thioredoxin domain-containing protein C959.05c (Schizosaccharomyces pombe (strain 972 / ATCC 24843) (Fission yeast)).